Reading from the N-terminus, the 154-residue chain is Ribonuclease K6 (154 aa).

The N-terminal stretch at 1–27 (MGPHLLGRSSLLLLLLGMWWSVRPLCA) is a signal peptide. The Proton acceptor role is filled by His42. 4 disulfides stabilise this stretch: Cys50–Cys108, Cys64–Cys118, Cys82–Cys133, and Cys89–Cys96. The N-linked (GlcNAc...) asparagine glycan is linked to Asn59. Residues 65–69 (KPENT) and Lys90 contribute to the substrate site. N-linked (GlcNAc...) asparagine glycosylation occurs at Asn104. His149 functions as the Proton donor in the catalytic mechanism.

It belongs to the pancreatic ribonuclease family. As to quaternary structure, interacts (via N-terminus) with bacterial lipopolysaccharide (LPS). As to expression, kidney (at protein level).

It localises to the secreted. It is found in the lysosome. The protein localises to the cytoplasmic granule. In terms of biological role, ribonuclease which shows a preference for the pyrimidines uridine and cytosine. Has potent antimicrobial activity against a range of Gram-positive and Gram-negative bacteria, including P.aeruginosa, A.baumanii, M.luteus, S.aureus, E.faecalis, E.faecium, S.saprophyticus and E.coli. Causes loss of bacterial membrane integrity, and also promotes agglutination of Gram-negative bacteria. Probably contributes to urinary tract sterility. Bactericidal activity is independent of RNase activity. This is Ribonuclease K6 (RNASE6) from Bos taurus (Bovine).